A 396-amino-acid polypeptide reads, in one-letter code: Phosphoglycerate kinase (396 aa).

Substrate is bound by residues 21–23 (DFN), R36, 59–62 (HLGR), R118, and R151. ATP-binding positions include K201, G292, E323, and 349-352 (GGDS).

It belongs to the phosphoglycerate kinase family. In terms of assembly, monomer.

Its subcellular location is the cytoplasm. It carries out the reaction (2R)-3-phosphoglycerate + ATP = (2R)-3-phospho-glyceroyl phosphate + ADP. It functions in the pathway carbohydrate degradation; glycolysis; pyruvate from D-glyceraldehyde 3-phosphate: step 2/5. In Leptospira borgpetersenii serovar Hardjo-bovis (strain L550), this protein is Phosphoglycerate kinase.